Reading from the N-terminus, the 832-residue chain is Prickle-like protein 1 (832 aa).

The 109-residue stretch at 14–122 folds into the PET domain; that stretch reads FGCQRSSTSD…TIKLLSRAVM (109 aa). LIM zinc-binding domains follow at residues 124–188, 189–249, and 250–313; these read AVCE…ELLK, PRCS…LYAE, and YCET…EDIH. Residues 314–342 form a disordered region; the sequence is ASDSSDSAFQSARSRDSRRSVRMGRSSRS. Phosphoserine is present on residues Ser-315, Ser-592, and Ser-595. Disordered stretches follow at residues 663–688 and 765–832; these read HFEE…DNAL and SSST…CIIS. Residues 670–681 show a composition bias toward basic residues; the sequence is RPHHHRHRRSRK. The residue at position 684 (Ser-684) is a Phosphoserine. Positions 798-815 are enriched in polar residues; it reads DLSSPASALPTPQFTQRT. Over residues 816–832 the composition is skewed to basic residues; the sequence is TKSKKKKGHKGKNCIIS. Cys-829 is modified (cysteine methyl ester). Cys-829 carries the S-farnesyl cysteine lipid modification. Residues 830–832 constitute a propeptide, removed in mature form; the sequence is IIS.

It belongs to the prickle / espinas / testin family. As to quaternary structure, interacts with REST.

The protein resides in the nucleus membrane. Its subcellular location is the cytoplasm. It localises to the cytosol. In terms of biological role, involved in the planar cell polarity pathway that controls convergent extension during gastrulation and neural tube closure. Convergent extension is a complex morphogenetic process during which cells elongate, move mediolaterally, and intercalate between neighboring cells, leading to convergence toward the mediolateral axis and extension along the anteroposterior axis. Necessary for nuclear localization of REST. May serve as nuclear receptor. In Mus musculus (Mouse), this protein is Prickle-like protein 1 (Prickle1).